Consider the following 203-residue polypeptide: Lipoprotein MlpJ (203 aa).

A signal peptide spans 1–17; the sequence is MKIINILFCISLLLLNS. The N-palmitoyl cysteine moiety is linked to residue Cys-18. A lipid anchor (S-diacylglycerol cysteine) is attached at Cys-18. A disordered region spans residues 26–47; the sequence is LKNNAQQTKSRKKRDLSQEELP.

It belongs to the Multicopy lipoprotein (Mlp) family.

The protein resides in the cell outer membrane. In terms of biological role, an outer membrane protein that may participate in pathogenesis. Some human Lyme disease patients have antibodies against this protein. The Mlp proteins probably undergo intragenic recombination, generating new alleles. The chain is Lipoprotein MlpJ from Borreliella burgdorferi (strain ATCC 35210 / DSM 4680 / CIP 102532 / B31) (Borrelia burgdorferi).